The chain runs to 128 residues: Cytochrome c' (128 aa).

Q13, Q17, E69, T70, C118, C121, and H122 together coordinate heme c.

Homodimer. Binds 1 heme c group covalently per subunit.

In terms of biological role, cytochrome c' is the most widely occurring bacterial c-type cytochrome. Cytochromes c' are high-spin proteins and the heme has no sixth ligand. Their exact function is not known. This Magnetospirillum molischianum (Rhodospirillum molischianum) protein is Cytochrome c'.